The sequence spans 426 residues: Trigger factor (426 aa).

Residues 165–239 form the PPIase FKBP-type domain; that stretch reads GDVYKLNEAG…ISEIKRLELP (75 aa).

It belongs to the FKBP-type PPIase family. Tig subfamily.

The protein localises to the cytoplasm. It catalyses the reaction [protein]-peptidylproline (omega=180) = [protein]-peptidylproline (omega=0). In terms of biological role, involved in protein export. Acts as a chaperone by maintaining the newly synthesized protein in an open conformation. Functions as a peptidyl-prolyl cis-trans isomerase. The chain is Trigger factor from Pelodictyon phaeoclathratiforme (strain DSM 5477 / BU-1).